A 338-amino-acid chain; its full sequence is Pseudouridylate synthase TRUB1 (338 aa).

Ala-2 is modified (N-acetylalanine). Residue Asp-109 is the Nucleophile of the active site.

The protein belongs to the pseudouridine synthase TruB family.

The protein localises to the nucleus. The protein resides in the cytoplasm. It localises to the cytosol. The catalysed reaction is a uridine in mRNA = a pseudouridine in mRNA. It carries out the reaction a uridine in tRNA = a pseudouridine in tRNA. It catalyses the reaction uridine(55) in tRNA = pseudouridine(55) in tRNA. Its function is as follows. Pseudouridine synthase that catalyzes pseudouridylation of mRNAs and tRNAs. Mediates pseudouridylation of mRNAs with the consensus sequence 5'-GUUCNANNC-3', harboring a stem-loop structure. Constitutes the major pseudouridine synthase acting on mRNAs. Also catalyzes pseudouridylation of some tRNAs, including synthesis of pseudouridine(55) from uracil-55, in the psi GC loop of a subset of tRNAs. Promotes the processing of pri-let-7 microRNAs (pri-miRNAs) independently of its RNA pseudouridylate synthase activity. Acts by binding to the stem-loop structure on pri-let-7, preventing LIN28-binding (LIN28A and/or LIN28B), thereby enhancing the interaction between pri-let-7 and the microprocessor DGCR8, which mediates miRNA maturation. The chain is Pseudouridylate synthase TRUB1 from Mus musculus (Mouse).